The sequence spans 332 residues: GTPase Obg (332 aa).

The Obg domain occupies Met1–Ile159. The 169-residue stretch at Ala160 to Arg328 folds into the OBG-type G domain. GTP-binding positions include Gly166 to Ser173, Phe191 to His195, Asp213 to Gly216, Asn280 to Asp283, and Ser309 to Ala311. Ser173 and Thr193 together coordinate Mg(2+).

It belongs to the TRAFAC class OBG-HflX-like GTPase superfamily. OBG GTPase family. As to quaternary structure, monomer. Mg(2+) serves as cofactor.

The protein localises to the cytoplasm. An essential GTPase which binds GTP, GDP and possibly (p)ppGpp with moderate affinity, with high nucleotide exchange rates and a fairly low GTP hydrolysis rate. Plays a role in control of the cell cycle, stress response, ribosome biogenesis and in those bacteria that undergo differentiation, in morphogenesis control. This is GTPase Obg from Acidiphilium cryptum (strain JF-5).